The primary structure comprises 430 residues: Glutamyl-tRNA reductase 1 (430 aa).

Substrate is bound by residues 49–52, S109, 114–116, and Q120; these read TCNR and EGQ. Residue C50 is the Nucleophile of the active site. Residue 189 to 194 coordinates NADP(+); that stretch reads GAGSMA.

Belongs to the glutamyl-tRNA reductase family. Homodimer.

It carries out the reaction (S)-4-amino-5-oxopentanoate + tRNA(Glu) + NADP(+) = L-glutamyl-tRNA(Glu) + NADPH + H(+). It functions in the pathway porphyrin-containing compound metabolism; protoporphyrin-IX biosynthesis; 5-aminolevulinate from L-glutamyl-tRNA(Glu): step 1/2. In terms of biological role, catalyzes the NADPH-dependent reduction of glutamyl-tRNA(Glu) to glutamate 1-semialdehyde (GSA). The protein is Glutamyl-tRNA reductase 1 of Nocardioides sp. (strain ATCC BAA-499 / JS614).